The chain runs to 553 residues: Transcriptional regulator HilA (553 aa).

The ompR/PhoB-type DNA-binding region spans 11–107; the sequence is NKKFVFDDFI…LYGQGYRFNR (97 aa). A 4-aspartylphosphate modification is found at D62. The TPR repeat unit spans residues 372–405; that stretch reads ADIKYYYGWNLFMAGQLEEALQTINECLKLDPTR.

In terms of biological role, the main transcriptional regulator of the Salmonella pathogenicity island 1 (SPI1) gene expression. Activates the expression of invasion genes by a direct action at their promoters and also indirectly by increasing the level of invF. Also binds upstream of prgH and directly activates the expression of prgHIJK operon. In Salmonella typhi, this protein is Transcriptional regulator HilA (hilA).